The chain runs to 76 residues: Conotoxin Cal5a L2 (76 aa).

An N-terminal signal peptide occupies residues 1–22; that stretch reads MRFYIGLMAALMLTSILRTDSA. Positions 23 to 42 are excised as a propeptide; sequence SVGQTGTKSELALIERVIRQ. Pro50 bears the 4-hydroxyproline mark. 4-hydroxyproline; partial occurs at positions 58, 62, and 64.

The protein belongs to the conotoxin T superfamily. In terms of processing, contains 2 disulfide bonds that can be either 'C1-C3, C2-C4' or 'C1-C4, C2-C3', since these disulfide connectivities have been observed for conotoxins with cysteine framework V (for examples, see AC P0DQQ7 and AC P81755). In terms of tissue distribution, expressed by the venom duct.

It localises to the secreted. In terms of biological role, probable neurotoxin with unknown target. Possibly targets ion channels. This chain is Conotoxin Cal5a L2, found in Californiconus californicus (California cone).